Reading from the N-terminus, the 280-residue chain is Merozoite surface protein 2 (280 aa).

A signal peptide spans 1 to 20 (MKVIKTLSIINFFIFVTFNI). Asparagine 22 and asparagine 36 each carry an N-linked (GlcNAc...) asparagine glycan. The interval 44 to 206 (ANEGSNTKSV…PQTAENENPA (163 aa)) is polymorphic region. The segment at 47–242 (GSNTKSVGAN…SQKECTDGNK (196 aa)) is disordered. The segment at 51 to 74 (KSVGANAPKADTIASGSQSSTNSA) is 5 X 12 AA tandem repeats of P-P-I-T-T-T-E-S-N-S-R-S. Low complexity predominate over residues 64–98 (ASGSQSSTNSASTSTTNNGESQTTTPTAADTPTAT). The span at 99 to 149 (ESNSRSPPITTTESNSRSPPITTTESNSRSPPITTTESNSRSPPITTTESN) shows a compositional bias: polar residues. Tandem repeats lie at residues 105 to 116 (PPITTTESNSRS), 117 to 128 (PPITTTESNSRS), 129 to 140 (PPITTTESNSRS), and 141 to 152 (PPITTTESNSRS). The segment covering 150–163 (SRSPPITTTESSSS) has biased composition (low complexity). One copy of the 5; partial repeat lies at 153 to 160 (PPITTTES). Asparagine 168 carries N-linked (GlcNAc...) asparagine glycosylation. Residues 170–182 (TDGKGEESEKQNE) show a composition bias toward basic and acidic residues. Residues asparagine 184 and asparagine 229 are each glycosylated (N-linked (GlcNAc...) asparagine). Positions 233 to 242 (SQKECTDGNK) are enriched in basic and acidic residues. Cysteine 237 and cysteine 245 are oxidised to a cystine. N-linked (GlcNAc...) asparagine glycosylation is found at asparagine 253 and asparagine 254. Asparagine 254 carries the GPI-anchor amidated asparagine lipid modification. The propeptide at 255-280 (SSNIASINKFVVLISATLVLSFAIFI) is removed in mature form.

The protein resides in the cell membrane. Its function is as follows. May play a role in the merozoite attachment to the erythrocyte. This Plasmodium falciparum (isolate K1 / Thailand) protein is Merozoite surface protein 2.